The sequence spans 2184 residues: Genome polyprotein (2184 aa).

A lipid anchor (N-myristoyl glycine; by host) is attached at Gly-2. Over 2 to 1494 (GAQVSTQKTG…HVSRAFICLQ (1493 aa)) the chain is Cytoplasmic. An amphipathic alpha-helix region spans residues 567–583 (FYQGDVQNAVEGAMVRV). Active-site for protease 2A activity residues include His-871 and Asp-889. Residues Cys-906 and Cys-908 each contribute to the Zn(2+) site. The For protease 2A activity role is filled by Cys-960. Zn(2+)-binding residues include Cys-966 and His-968. The membrane-binding stretch occupies residues 1100–1172 (NNGWLKKFTE…EQSAPSQGDQ (73 aa)). The interval 1100–1238 (NNGWLKKFTE…SPGAGKSVAT (139 aa)) is oligomerization. The interval 1121–1125 (AIKIQ) is RNA-binding. Residues 1204–1360 (EKKMSNYIQF…SMYSQNGKIN (157 aa)) form the SF3 helicase domain. The Zn(2+) site is built by Cys-1368, Cys-1380, and Cys-1385. Residues 1368–1385 (CDEDCCPVNFKKCCPLVC) form a C4-type; degenerate zinc finger. The RNA-binding stretch occupies residues 1412-1419 (EYNHRHSV). Residues 1423-1428 (LEALFQ) are oligomerization. The stretch at 1495–1510 (ALTTFVSVAGIIYIIY) is an intramembrane region. Over 1511-2184 (KLFAGFQGAY…TLRRKWLDSF (674 aa)) the chain is Cytoplasmic. Tyr-1520 carries the O-(5'-phospho-RNA)-tyrosine modification. One can recognise a Peptidase C3 domain in the interval 1540-1718 (GPAFEFAVAM…FSAALLRHYF (179 aa)). Catalysis depends on for protease 3C activity residues His-1579, Glu-1610, and Cys-1686. The region spanning 1949–2065 (GHLIAFDYSG…SYPWPIDASL (117 aa)) is the RdRp catalytic domain. The Mg(2+) site is built by Asp-1955 and Asp-2051.

This sequence belongs to the picornaviruses polyprotein family. As to quaternary structure, interacts with capsid protein VP1 and capsid protein VP3 to form heterotrimeric protomers. Interacts with capsid protein VP0, and capsid protein VP3 to form heterotrimeric protomers. Five protomers subsequently associate to form pentamers which serve as building blocks for the capsid. Interacts with capsid protein VP2, capsid protein VP3 and capsid protein VP4 following cleavage of capsid protein VP0. In terms of assembly, interacts with capsid protein VP1 and capsid protein VP3 in the mature capsid. As to quaternary structure, interacts with capsid protein VP0 and capsid protein VP1 to form heterotrimeric protomers. Five protomers subsequently associate to form pentamers which serve as building blocks for the capsid. Interacts with capsid protein VP4 in the mature capsid. Interacts with protein 2C; this interaction may be important for virion morphogenesis. Interacts with capsid protein VP1 and capsid protein VP3. In terms of assembly, homodimer. As to quaternary structure, homohexamer; forms a hexameric ring structure with 6-fold symmetry characteristic of AAA+ ATPases. Interacts (via N-terminus) with host RTN3 (via reticulon domain); this interaction is important for viral replication. Interacts with capsid protein VP3; this interaction may be important for virion morphogenesis. Interacts with protein 3CD. In terms of assembly, homodimer. Interacts with host GBF1. Interacts (via GOLD domain) with host ACBD3 (via GOLD domain); this interaction allows the formation of a viral protein 3A/ACBD3 heterotetramer with a 2:2 stoichiometry, which will stimulate the recruitment of host PI4KB in order to synthesize PI4P at the viral RNA replication sites. As to quaternary structure, interacts with RNA-directed RNA polymerase. Interacts with protein 3AB and with RNA-directed RNA polymerase. In terms of assembly, interacts with Viral protein genome-linked and with protein 3CD. Requires Mg(2+) as cofactor. Post-translationally, specific enzymatic cleavages in vivo by the viral proteases yield processing intermediates and the mature proteins. In terms of processing, myristoylation is required for the formation of pentamers during virus assembly. Further assembly of 12 pentamers and a molecule of genomic RNA generates the provirion. During virion maturation, immature virions are rendered infectious following cleavage of VP0 into VP4 and VP2. This maturation seems to be an autocatalytic event triggered by the presence of RNA in the capsid and it is followed by a conformational change infectious virion. Post-translationally, myristoylation is required during RNA encapsidation and formation of the mature virus particle. In terms of processing, VPg is uridylylated by the polymerase into VPg-pUpU. This acts as a nucleotide-peptide primer for the genomic RNA replication.

Its subcellular location is the virion. The protein localises to the host cytoplasm. It localises to the host cytoplasmic vesicle membrane. It is found in the host nucleus. It catalyses the reaction a ribonucleoside 5'-triphosphate + H2O = a ribonucleoside 5'-diphosphate + phosphate + H(+). The catalysed reaction is Selective cleavage of Tyr-|-Gly bond in the picornavirus polyprotein.. It carries out the reaction RNA(n) + a ribonucleoside 5'-triphosphate = RNA(n+1) + diphosphate. The enzyme catalyses Selective cleavage of Gln-|-Gly bond in the poliovirus polyprotein. In other picornavirus reactions Glu may be substituted for Gln, and Ser or Thr for Gly.. Its activity is regulated as follows. Replication or transcription is subject to high level of random mutations by the nucleotide analog ribavirin. Functionally, forms an icosahedral capsid of pseudo T=3 symmetry with capsid proteins VP2 and VP3. The capsid is 300 Angstroms in diameter, composed of 60 copies of each capsid protein and enclosing the viral positive strand RNA genome. Capsid protein VP1 mainly forms the vertices of the capsid. Capsid protein VP1 interacts with host ITGA2/ITGB1 to provide virion attachment to target host cells. This attachment induces virion internalization predominantly through caveolin-mediated endocytosis. Tyrosine kinases are probably involved in the entry process. After binding to its receptor, the capsid undergoes conformational changes. Capsid protein VP1 N-terminus (that contains an amphipathic alpha-helix) and capsid protein VP4 are externalized. Together, they shape a pore in the host membrane through which viral genome is translocated to host cell cytoplasm. In terms of biological role, forms an icosahedral capsid of pseudo T=3 symmetry with capsid proteins VP2 and VP3. The capsid is 300 Angstroms in diameter, composed of 60 copies of each capsid protein and enclosing the viral positive strand RNA genome. Lies on the inner surface of the capsid shell. After binding to the host receptor, the capsid undergoes conformational changes. Capsid protein VP4 is released, Capsid protein VP1 N-terminus is externalized, and together, they shape a pore in the host membrane through which the viral genome is translocated into the host cell cytoplasm. Its function is as follows. Component of immature procapsids, which is cleaved into capsid proteins VP4 and VP2 after maturation. Allows the capsid to remain inactive before the maturation step. Functionally, cysteine protease that cleaves viral polyprotein and specific host proteins. It is responsible for the autocatalytic cleavage between the P1 and P2 regions, which is the first cleavage occurring in the polyprotein. Also cleaves the host translation initiation factor EIF4G1, in order to shut down the capped cellular mRNA translation. Inhibits the host nucleus-cytoplasm protein and RNA trafficking by cleaving host members of the nuclear pores. Counteracts stress granule formation probably by antagonizing its assembly or promoting its dissassembly. In terms of biological role, plays an essential role in the virus replication cycle by acting as a viroporin. Creates a pore in the host endoplasmic reticulum and as a consequence releases Ca2+ in the cytoplasm of infected cell. In turn, high levels of cytoplasmic calcium may trigger membrane trafficking and transport of viral ER-associated proteins to viroplasms, sites of viral genome replication. Induces and associates with structural rearrangements of intracellular membranes. Displays RNA-binding, nucleotide binding and NTPase activities. May play a role in virion morphogenesis and viral RNA encapsidation by interacting with the capsid protein VP3. Its function is as follows. Localizes the viral replication complex to the surface of membranous vesicles. Together with protein 3CD binds the Cis-Active RNA Element (CRE) which is involved in RNA synthesis initiation. Acts as a cofactor to stimulate the activity of 3D polymerase, maybe through a nucleid acid chaperone activity. Functionally, localizes the viral replication complex to the surface of membranous vesicles. It inhibits host cell endoplasmic reticulum-to-Golgi apparatus transport and causes the disassembly of the Golgi complex, possibly through GBF1 interaction. This would result in depletion of MHC, trail receptors and IFN receptors at the host cell surface. Plays an essential role in viral RNA replication by recruiting ACBD3 and PI4KB at the viral replication sites, thereby allowing the formation of the rearranged membranous structures where viral replication takes place. In terms of biological role, acts as a primer for viral RNA replication and remains covalently bound to viral genomic RNA. VPg is uridylylated prior to priming replication into VPg-pUpU. The oriI viral genomic sequence may act as a template for this. The VPg-pUpU is then used as primer on the genomic RNA poly(A) by the RNA-dependent RNA polymerase to replicate the viral genome. During genome replication, the VPg-RNA linkage is removed by the host TDP2, thereby accelerating replication. During the late stage of the replication cycle, host TDP2 is excluded from sites of viral RNA synthesis and encapsidation, allowing for the generation of progeny virions. Involved in the viral replication complex and viral polypeptide maturation. It exhibits protease activity with a specificity and catalytic efficiency that is different from protease 3C. Protein 3CD lacks polymerase activity. Protein 3CD binds to the 5'UTR of the viral genome. Its function is as follows. Replicates the viral genomic RNA on the surface of intracellular membranes. May form linear arrays of subunits that propagate along a strong head-to-tail interaction called interface-I. Covalently attaches UMP to a tyrosine of VPg, which is used to prime RNA synthesis. The positive stranded RNA genome is first replicated at virus induced membranous vesicles, creating a dsRNA genomic replication form. This dsRNA is then used as template to synthesize positive stranded RNA genomes. ss(+)RNA genomes are either translated, replicated or encapsidated. Functionally, major viral protease that mediates proteolytic processing of the polyprotein. Cleaves host EIF5B, contributing to host translation shutoff. Also cleaves host PABPC1, contributing to host translation shutoff. Cleaves host NLRP1, triggers host N-glycine-mediated degradation of the autoinhibitory NLRP1 N-terminal fragment. The chain is Genome polyprotein from Homo sapiens (Human).